We begin with the raw amino-acid sequence, 178 residues long: Large ribosomal subunit protein uL5 (178 aa).

It belongs to the universal ribosomal protein uL5 family. In terms of assembly, part of the 50S ribosomal subunit; part of the 5S rRNA/L5/L18/L25 subcomplex. Contacts the 5S rRNA and the P site tRNA. Forms a bridge to the 30S subunit in the 70S ribosome.

Functionally, this is one of the proteins that bind and probably mediate the attachment of the 5S RNA into the large ribosomal subunit, where it forms part of the central protuberance. In the 70S ribosome it contacts protein S13 of the 30S subunit (bridge B1b), connecting the 2 subunits; this bridge is implicated in subunit movement. Contacts the P site tRNA; the 5S rRNA and some of its associated proteins might help stabilize positioning of ribosome-bound tRNAs. This Prochlorococcus marinus (strain MIT 9515) protein is Large ribosomal subunit protein uL5.